A 65-amino-acid polypeptide reads, in one-letter code: VESP-VB2 (65 aa).

A signal peptide spans 1–23 (MKMSILFLFALIASLACLQLTFA). AXPX repeat units lie at residues 23 to 26 (AAPA), 27 to 30 (ASPF), 31 to 34 (ANPG), 35 to 38 (ASPE), 39 to 42 (AAPL), 43 to 46 (ADPL), and 47 to 50 (ADPF). A propeptide spanning residues 24-49 (APAASPFANPGASPEAAPLADPLADP) is cleaved from the precursor. Position 62 is a leucine amide (leucine 62).

This sequence belongs to the MCD family. Mastoparan subfamily. In terms of tissue distribution, expressed by the venom gland.

The protein localises to the secreted. Its function is as follows. Antimicrobial peptide. Shows activity against both Gram-positive and -negative bacteria, as well against fungi. Also promotes important mast cell degranulation. Shows little hemolytic activity on rabbit and human erythrocytes. Its mast cell degranulation activity may be related to the activation of G-protein coupled receptors in mast cells as well as interaction with other proteins located in cell endosomal membranes in the mast cells. The chain is VESP-VB2 from Vespa bicolor (Black shield wasp).